Here is a 96-residue protein sequence, read N- to C-terminus: UPF0251 protein Shal_3723 (96 aa).

This sequence belongs to the UPF0251 family.

The protein is UPF0251 protein Shal_3723 of Shewanella halifaxensis (strain HAW-EB4).